Reading from the N-terminus, the 366-residue chain is 1-deoxy-D-xylulose 5-phosphate reductoisomerase (366 aa).

Thr7, Gly8, Ser9, Ile10, Gly31, Lys32, Asn33, and Asn113 together coordinate NADPH. A 1-deoxy-D-xylulose 5-phosphate-binding site is contributed by Lys114. Position 115 (Glu115) interacts with NADPH. A Mn(2+)-binding site is contributed by Asp133. 4 residues coordinate 1-deoxy-D-xylulose 5-phosphate: Ser134, Glu135, Ser158, and His181. Position 135 (Glu135) interacts with Mn(2+). Gly187 contacts NADPH. 1-deoxy-D-xylulose 5-phosphate contacts are provided by Ser194, Asn199, Lys200, and Glu203. Glu203 contributes to the Mn(2+) binding site.

It belongs to the DXR family. Mg(2+) is required as a cofactor. Mn(2+) serves as cofactor.

The enzyme catalyses 2-C-methyl-D-erythritol 4-phosphate + NADP(+) = 1-deoxy-D-xylulose 5-phosphate + NADPH + H(+). Its pathway is isoprenoid biosynthesis; isopentenyl diphosphate biosynthesis via DXP pathway; isopentenyl diphosphate from 1-deoxy-D-xylulose 5-phosphate: step 1/6. In terms of biological role, catalyzes the NADPH-dependent rearrangement and reduction of 1-deoxy-D-xylulose-5-phosphate (DXP) to 2-C-methyl-D-erythritol 4-phosphate (MEP). The sequence is that of 1-deoxy-D-xylulose 5-phosphate reductoisomerase from Helicobacter pylori (strain G27).